Reading from the N-terminus, the 490-residue chain is GTPase Der (490 aa).

EngA-type G domains are found at residues 3-166 (PVVA…AEAM) and 200-373 (IKLA…DSAT). Residues 9–16 (GRPNVGKS), 56–60 (DTGGI), 118–121 (NKVD), 206–213 (GKPNVGKS), 253–257 (DTAGV), and 318–321 (NKWD) contribute to the GTP site. Positions 374–458 (RRVSTSMLTR…PIQLRFQEGG (85 aa)) constitute a KH-like domain.

It belongs to the TRAFAC class TrmE-Era-EngA-EngB-Septin-like GTPase superfamily. EngA (Der) GTPase family. Associates with the 50S ribosomal subunit.

Functionally, GTPase that plays an essential role in the late steps of ribosome biogenesis. This is GTPase Der from Shewanella halifaxensis (strain HAW-EB4).